The following is an 844-amino-acid chain: Serrate RNA effector molecule homolog B (844 aa).

Disordered stretches follow at residues 1–90 (MADS…HGSD), 277–401 (EAAK…PRPL), 555–575 (ELLS…GNPT), and 794–825 (PNPY…MRGD). Basic and acidic residues-rich tracts occupy residues 16-73 (FRRE…RHDI) and 277-337 (EAAK…ETRK). Residues 349–359 (SDDGSDSESDT) are compositionally biased toward acidic residues. Residues 376 to 397 (DTPKKEEETEKPKEKPKEDTVK) are compositionally biased toward basic and acidic residues.

It belongs to the ARS2 family. As to quaternary structure, interacts ncbp1/cbp80.

It is found in the nucleus. Its subcellular location is the nucleoplasm. The protein localises to the cytoplasm. Acts as a mediator between the cap-binding complex (CBC) and the primary microRNAs (miRNAs) processing machinery during cell proliferation. Contributes to the stability and delivery of capped primary miRNA transcripts to the primary miRNA processing complex, thereby playing a role in RNA-mediated gene silencing (RNAi) by miRNAs. The polypeptide is Serrate RNA effector molecule homolog B (srrt-b) (Xenopus laevis (African clawed frog)).